We begin with the raw amino-acid sequence, 103 residues long: Large ribosomal subunit protein uL24 (103 aa).

The protein belongs to the universal ribosomal protein uL24 family. In terms of assembly, part of the 50S ribosomal subunit.

Its function is as follows. One of two assembly initiator proteins, it binds directly to the 5'-end of the 23S rRNA, where it nucleates assembly of the 50S subunit. In terms of biological role, one of the proteins that surrounds the polypeptide exit tunnel on the outside of the subunit. The chain is Large ribosomal subunit protein uL24 from Actinobacillus succinogenes (strain ATCC 55618 / DSM 22257 / CCUG 43843 / 130Z).